The chain runs to 287 residues: Acetyl-coenzyme A carboxylase carboxyl transferase subunit beta (287 aa).

The region spanning 25 to 287 (IWTKCSGCVQ…KLTQQSFSEK (263 aa)) is the CoA carboxyltransferase N-terminal domain. The Zn(2+) site is built by Cys-29, Cys-32, Cys-48, and Cys-51. The C4-type zinc-finger motif lies at 29-51 (CSGCVQLLYTKELERNLQVCPKC).

Belongs to the AccD/PCCB family. In terms of assembly, acetyl-CoA carboxylase is a heterohexamer composed of biotin carboxyl carrier protein (AccB), biotin carboxylase (AccC) and two subunits each of ACCase subunit alpha (AccA) and ACCase subunit beta (AccD). Zn(2+) is required as a cofactor.

The protein resides in the cytoplasm. It catalyses the reaction N(6)-carboxybiotinyl-L-lysyl-[protein] + acetyl-CoA = N(6)-biotinyl-L-lysyl-[protein] + malonyl-CoA. It functions in the pathway lipid metabolism; malonyl-CoA biosynthesis; malonyl-CoA from acetyl-CoA: step 1/1. In terms of biological role, component of the acetyl coenzyme A carboxylase (ACC) complex. Biotin carboxylase (BC) catalyzes the carboxylation of biotin on its carrier protein (BCCP) and then the CO(2) group is transferred by the transcarboxylase to acetyl-CoA to form malonyl-CoA. The protein is Acetyl-coenzyme A carboxylase carboxyl transferase subunit beta of Blochmanniella floridana.